The sequence spans 412 residues: UPF0761 membrane protein lpg0643 (412 aa).

A run of 6 helical transmembrane segments spans residues 36 to 56 (ALAF…LAIF), 99 to 119 (LSIW…FTIE), 137 to 157 (AFLL…LSLA), 177 to 197 (ILHY…YVVV), 210 to 230 (GGLV…YYLI), and 241 to 261 (AFAT…ITLL).

This sequence belongs to the UPF0761 family.

The protein localises to the cell inner membrane. The polypeptide is UPF0761 membrane protein lpg0643 (Legionella pneumophila subsp. pneumophila (strain Philadelphia 1 / ATCC 33152 / DSM 7513)).